Consider the following 280-residue polypeptide: uncharacterized protein (280 aa).

The region spanning 1–78 (MDVIQRIKEK…VLLAQSISRA (78 aa)) is the HTH rpiR-type domain. A DNA-binding region (H-T-H motif) is located at residues 37 to 57 (ISDLSEKAGVKSEASVVKFYK). Residues 123–263 (TVDLFKNAQR…YTLLAARDPR (141 aa)) form the SIS domain.

This is an uncharacterized protein from Thermotoga maritima (strain ATCC 43589 / DSM 3109 / JCM 10099 / NBRC 100826 / MSB8).